Consider the following 332-residue polypeptide: Fructose-1,6-bisphosphatase class 1 (332 aa).

Mg(2+) contacts are provided by Glu-92, Asp-113, Leu-115, and Asp-116. Residues 116 to 119, Asn-209, Tyr-242, and Lys-272 contribute to the substrate site; that span reads DGSS. Glu-278 lines the Mg(2+) pocket.

The protein belongs to the FBPase class 1 family. In terms of assembly, homotetramer. Mg(2+) is required as a cofactor.

Its subcellular location is the cytoplasm. The catalysed reaction is beta-D-fructose 1,6-bisphosphate + H2O = beta-D-fructose 6-phosphate + phosphate. Its pathway is carbohydrate biosynthesis; Calvin cycle. The sequence is that of Fructose-1,6-bisphosphatase class 1 from Prosthecochloris aestuarii (strain DSM 271 / SK 413).